The primary structure comprises 628 residues: FAD-linked oxidoreductase hmp9 (628 aa).

Positions 1 to 29 are cleaved as a signal peptide; the sequence is MFCIIRAQLLLLLHLLVLALLLVGTVCNA. The disordered stretch occupies residues 34-53; the sequence is GHPSELEPLALKRGGSPRDD. N-linked (GlcNAc...) asparagine glycans are attached at residues Asn-80 and Asn-133. The FAD-binding PCMH-type domain occupies 152-337; sequence LGQLPVYAID…LKTKIKAYPN (186 aa). Asn-356 carries an N-linked (GlcNAc...) asparagine glycan.

It belongs to the oxygen-dependent FAD-linked oxidoreductase family.

The protein operates within secondary metabolite biosynthesis. Its function is as follows. FAD-linked oxidoreductase; part of the gene cluster that mediates the biosynthesis of hypothemycin, a resorcylic acid lactone (RAL) that irreversibly inhibits a subset of protein kinases with a conserved cysteine in the ATP binding site such as human ERK2. The first step is performed by both PKSs hmp3 and hmp8 and leads to the production of 7',8'-dehydrozearalenol (DHZ). The highly reducing PKS hpm8 synthesizes the reduced hexaketide (7S,11S,2E,8E)-7,11-dihydroxy-dodeca-2,8-dienoate, which is transferred downstream to the non-reducing PKS hpm3. Hpm3 then extends the reduced hexaketide to a nonaketide, after which regioselective cyclization and macrolactonization affords DHZ. The next step is the conversion of DHZ into aigialomycin C and is performed by the O-methyltransferase hmp5, the FAD-binding monooxygenase hmp7, and the cytochrome P450 monooxygenase hmp1. The wide substrate tolerance of the hmp5 and hmp7 implies that the reactions from DHZ to aigialomycin C can occur in any order. The steps from aigialomycin C to hypothemycin are less well established. The FAD-linked oxidoreductase hmp9 presumably catalyzes oxidation of the C-6' hydroxyl to a ketone. The timing of this oxidation is important, since the resulting enone functional group is a Michael acceptor that can react spontaneously with glutathione, an abundant metabolite in fungal cells. The glutathione S-transferase hmp2 catalyzes cis-trans isomerization of the 7',8' double bond with equilibrium favoring the trans isomer. The hpm6-encoded transporter might preferentially pump hypothemycin out of the cell relative to the trans isomer aigialomycin A. The cis-to-trans isomerization may be coupled with C-4' hydroxylation, since all known hypothemycin analogs containing the enone functional group also have hydroxyl groups at both C-4' and C-5'. The polypeptide is FAD-linked oxidoreductase hmp9 (Hypomyces subiculosus (Nectria subiculosa)).